Reading from the N-terminus, the 353-residue chain is UPF0283 membrane protein YcjF (353 aa).

Basic and acidic residues predominate over residues 1–19; that stretch reads MSEPLKPRIDFAEPLKEEP. The tract at residues 1 to 48 is disordered; the sequence is MSEPLKPRIDFAEPLKEEPTSAFKAQQTFSEAESHTFAPAAIDERPED. Topologically, residues 1–69 are periplasmic; it reads MSEPLKPRID…LRPKRSLWRK (69 aa). A helical membrane pass occupies residues 70-90; that stretch reads MVMGGLALFGASVVGQGVQWT. At 91–99 the chain is on the cytoplasmic side; that stretch reads MNAWQTQDW. A helical transmembrane segment spans residues 100–120; that stretch reads VALGGCAAGALIVGAGVGSVV. The Periplasmic segment spans residues 121-212; the sequence is TEWWRLWRLR…ARREISRFAA (92 aa). A helical membrane pass occupies residues 213–233; that stretch reads ESTLMIAVSPLALVDMAFIAW. Topologically, residues 234-353 are cytoplasmic; it reads RNLRLINRIA…LQKSKSSPEK (120 aa).

Belongs to the UPF0283 family.

It is found in the cell inner membrane. This chain is UPF0283 membrane protein YcjF (ycjF), found in Salmonella typhi.